Here is an 888-residue protein sequence, read N- to C-terminus: Semaphorin-6B (888 aa).

Residues 1–25 form the signal peptide; the sequence is MQTPRASPPRPALLLLLLLLGGAHG. Residues 26–603 lie on the Extracellular side of the membrane; it reads LFPEEPPPLS…VSVNLLVTSS (578 aa). Residues 31–523 form the Sema domain; sequence PPPLSVAPRD…FPRCVVRVPV (493 aa). Residue N74 is glycosylated (N-linked (GlcNAc...) asparagine). Cystine bridges form between C116–C126 and C144–C153. Residues N155, N167, and N291 are each glycosylated (N-linked (GlcNAc...) asparagine). Intrachain disulfides connect C267–C378 and C292–C337. 3 N-linked (GlcNAc...) asparagine glycosylation sites follow: N386, N441, and N462. Cystine bridges form between C486–C517, C526–C544, C532–C578, and C536–C552. The chain crosses the membrane as a helical span at residues 604 to 624; it reads VAAFVVGAVVSGFSVGWFVGL. Residues 625–888 lie on the Cytoplasmic side of the membrane; sequence RERRELARRK…GADRTAPPVP (264 aa). Disordered regions lie at residues 651–679, 695–742, and 757–888; these read VSRL…PPEA, LQGG…HPLL, and RAPE…PPVP. Gly residues predominate over residues 661–674; it reads GPGGRGGGGGGGAG. Position 665 is an omega-N-methylarginine (R665). Positions 706-717 are enriched in low complexity; sequence LLPTPEQTPLPQ.

The protein belongs to the semaphorin family. In terms of assembly, (Microbial infection) Interacts with P.sordellii toxin TcsL; semaphorins SEMA6A and SEMA6B constitute the major host receptors for TcsL in the vascular endothelium. As to expression, expressed in the brain in GABAergic neurons.

It localises to the cell membrane. In terms of biological role, functions as a cell surface repellent for mossy fibers of developing neurons in the hippocampus where it plays a role in axon guidance. May function through the PLXNA4 receptor expressed by mossy cell axons. Its function is as follows. (Microbial infection) Acts as a receptor for P.sordellii toxin TcsL in the in the vascular endothelium. The chain is Semaphorin-6B (SEMA6B) from Homo sapiens (Human).